Here is a 69-residue protein sequence, read N- to C-terminus: Large ribosomal subunit protein uL29 (69 aa).

This sequence belongs to the universal ribosomal protein uL29 family.

This Natronomonas pharaonis (strain ATCC 35678 / DSM 2160 / CIP 103997 / JCM 8858 / NBRC 14720 / NCIMB 2260 / Gabara) (Halobacterium pharaonis) protein is Large ribosomal subunit protein uL29.